Here is a 251-residue protein sequence, read N- to C-terminus: MPRYKLTVEYDGTPYVGWQRQENGHAVQGAIEQAFKKFCGEDLTLSAAGRTDAGVHATAQVAHVDLAKDWGAGKVRDAVNAHLVMADERISILNVEKTTDTFDARFSARARHYLYRIHNRRAPLAVDYQRAWWVQKQLDADAMHEAAQRLLGEHDFTTFRATQCQAKSPVKTLDRLDVTRNGDMVEMRVSARSFLHNQVRSFAGSLMEVGVGRWTADDLQAALEARDRKACGQVAPPYGLYLVGVDYAFPF.

The active-site Nucleophile is Asp-52. A substrate-binding site is contributed by Tyr-113.

This sequence belongs to the tRNA pseudouridine synthase TruA family. In terms of assembly, homodimer.

It catalyses the reaction uridine(38/39/40) in tRNA = pseudouridine(38/39/40) in tRNA. Its function is as follows. Formation of pseudouridine at positions 38, 39 and 40 in the anticodon stem and loop of transfer RNAs. This Brucella abortus (strain 2308) protein is tRNA pseudouridine synthase A.